The following is a 163-amino-acid chain: Small ribosomal subunit protein uS5 (163 aa).

In terms of domain architecture, S5 DRBM spans 8 to 71 (FIEKVVSLNR…EQARKAMMKI (64 aa)).

This sequence belongs to the universal ribosomal protein uS5 family. In terms of assembly, part of the 30S ribosomal subunit. Contacts proteins S4 and S8.

In terms of biological role, with S4 and S12 plays an important role in translational accuracy. Located at the back of the 30S subunit body where it stabilizes the conformation of the head with respect to the body. The polypeptide is Small ribosomal subunit protein uS5 (Lawsonia intracellularis (strain PHE/MN1-00)).